The following is a 602-amino-acid chain: Putative pentatricopeptide repeat-containing protein At1g12700, mitochondrial (602 aa).

The transit peptide at 1–95 (MMIKRSITTN…PSLVDFSRFF (95 aa)) directs the protein to the mitochondrion. PPR repeat units follow at residues 87–121 (SLVDFSRFFSAIARTKQFNLVLDFCKQLELNGIAH), 122–156 (NIYTLNIMINCFCRCCKTCFAYSVLGKVMKLGYEP), 157–191 (DTTTFNTLIKGLFLEGKVSEAVVLVDRMVENGCQP), 192–226 (DVVTYNSIVNGICRSGDTSLALDLLRKMEERNVKA), 227–261 (DVFTYSTIIDSLCRDGCIDAAISLFKEMETKGIKS), 262–296 (SVVTYNSLVRGLCKAGKWNDGALLLKDMVSREIVP), 297–331 (NVITFNVLLDVFVKEGKLQEANELYKEMITRGISP), 332–366 (NIITYNTLMDGYCMQNRLSEANNMLDLMVRNKCSP), 367–401 (DIVTFTSLIKGYCMVKRVDDGMKVFRNISKRGLVA), 402–436 (NAVTYSILVQGFCQSGKIKLAEELFQEMVSHGVLP), 437–471 (DVMTYGILLDGLCDNGKLEKALEIFEDLQKSKMDL), 472–506 (GIVMYTTIIEGMCKGGKVEDAWNLFCSLPCKGVKP), 507–541 (NVMTYTVMISGLCKKGSLSEANILLRKMEEDGNAP), and 542–576 (NDCTYNTLIRAHLRDGDLTASAKLIEEMKSCGFSA).

Belongs to the PPR family. P subfamily.

It is found in the mitochondrion. This is Putative pentatricopeptide repeat-containing protein At1g12700, mitochondrial from Arabidopsis thaliana (Mouse-ear cress).